A 1047-amino-acid polypeptide reads, in one-letter code: Probable phospholipid-transporting ATPase IIA (1047 aa).

Threonine 2 is subject to N-acetylthreonine. Residues 2 to 69 are Cytoplasmic-facing; the sequence is TDNIPLQPVR…NQKYNFFTFL (68 aa). The chain crosses the membrane as a helical span at residues 70-91; sequence PGVLFNQFKYFFNLYFLLLACS. Over 92–96 the chain is Extracellular; it reads QFVPE. A helical membrane pass occupies residues 97–119; it reads MRLGALYTYWVPLGFVLAVTVIR. Residues 120 to 303 are Cytoplasmic-facing; the sequence is EAVEEIRCYV…GLFDLEVNCL (184 aa). The chain crosses the membrane as a helical span at residues 304–325; the sequence is TKILFGALVVVSLVMVALQHFA. The Extracellular segment spans residues 326–332; sequence GRWYLQI. A helical membrane pass occupies residues 333–354; sequence IRFLLLFSNIIPISLRVNLDMG. The Cytoplasmic portion of the chain corresponds to 355–841; that stretch reads KIVYSWVIRR…GRNSYKRSAA (487 aa). Aspartate 391 (4-aspartylphosphate intermediate) is an active-site residue. 13 residues coordinate ATP: aspartate 391, lysine 392, threonine 393, glutamate 502, phenylalanine 544, lysine 549, lysine 568, arginine 597, threonine 677, glycine 678, aspartate 679, arginine 759, and lysine 765. Position 391 (aspartate 391) interacts with Mg(2+). Threonine 393 contributes to the Mg(2+) binding site. Residue aspartate 785 coordinates Mg(2+). ATP is bound by residues asparagine 788 and aspartate 789. Position 789 (aspartate 789) interacts with Mg(2+). A helical membrane pass occupies residues 842–862; sequence LSQFVIHRSLCISTMQAVFSS. Residues 863–874 are Extracellular-facing; it reads VFYFASVPLYQG. Residues 875-893 form a helical membrane-spanning segment; that stretch reads FLIIGYSTIYTMFPVFSLV. Topologically, residues 894–923 are cytoplasmic; that stretch reads LDKDVKSEVAMLYPELYKDLLKGRPLSYKT. A helical membrane pass occupies residues 924 to 942; sequence FLIWVLISIYQGSTIMYGA. The Extracellular portion of the chain corresponds to 943-949; it reads LLLFESE. The chain crosses the membrane as a helical span at residues 950 to 972; sequence FVHIVAISFTSLILTELLMVALT. The Cytoplasmic segment spans residues 973 to 978; sequence IQTWHW. A helical transmembrane segment spans residues 979 to 999; sequence LMTVAELLSLACYIASLVFLH. Topologically, residues 1000 to 1006 are extracellular; it reads EFIDVYF. The helical transmembrane segment at 1007 to 1030 threads the bilayer; that stretch reads IATLSFLWKVSVITLVSCLPLYVL. Over 1031–1047 the chain is Cytoplasmic; the sequence is KYLRRRFSPPSYSKLTS.

The protein belongs to the cation transport ATPase (P-type) (TC 3.A.3) family. Type IV subfamily. As to quaternary structure, heterotrimer with MON2 and DOP1B; this complex regulates SNX3-retromer mediated endosomal sorting of WLS. Interacts with RAB5A and RAB11A. It depends on Mg(2+) as a cofactor.

Its subcellular location is the early endosome membrane. The protein resides in the recycling endosome membrane. It is found in the late endosome membrane. The protein localises to the golgi apparatus. It localises to the trans-Golgi network membrane. Its subcellular location is the cell membrane. It carries out the reaction ATP + H2O + phospholipidSide 1 = ADP + phosphate + phospholipidSide 2.. In terms of biological role, plays a role in regulating membrane trafficking of cargo proteins, namely endosome to plasma membrane recycling, probably acting through RAB5 and RAB11 activation. Also involved in endosome to trans-Golgi network retrograde transport. In complex with MON2 and DOP1B, regulates SNX3 retromer-mediated endosomal sorting of WLS, a transporter of Wnt morphogens in developing tissues. Participates in the formation of endosomal carriers that direct WLS trafficking back to Golgi, away from lysosomal degradation. Appears to be implicated in intercellular communication by negatively regulating the release of exosomes. The flippase activity towards membrane lipids and its role in membrane asymmetry remains to be proved. Required for the maintenance of neurite morphology and synaptic transmission. The polypeptide is Probable phospholipid-transporting ATPase IIA (Homo sapiens (Human)).